Consider the following 72-residue polypeptide: Large ribosomal subunit protein bL31 (72 aa).

This sequence belongs to the bacterial ribosomal protein bL31 family. Type A subfamily. In terms of assembly, part of the 50S ribosomal subunit.

In terms of biological role, binds the 23S rRNA. The sequence is that of Large ribosomal subunit protein bL31 from Maricaulis maris (strain MCS10) (Caulobacter maris).